A 180-amino-acid chain; its full sequence is Isopentenyl-diphosphate Delta-isomerase (180 aa).

Mn(2+) is bound by residues His26 and His32. The 139-residue stretch at 30–168 folds into the Nudix hydrolase domain; it reads ALHLAFSVLL…PELFTAWFPQ (139 aa). Residue Cys70 is part of the active site. Cys70 provides a ligand contact to Mg(2+). Residue His72 participates in Mn(2+) binding. Glu90 is a Mg(2+) binding site. Mn(2+) contacts are provided by Glu117 and Glu119. The active site involves Glu119.

It belongs to the IPP isomerase type 1 family. Requires Mg(2+) as cofactor. It depends on Mn(2+) as a cofactor.

The protein resides in the cytoplasm. It carries out the reaction isopentenyl diphosphate = dimethylallyl diphosphate. It functions in the pathway isoprenoid biosynthesis; dimethylallyl diphosphate biosynthesis; dimethylallyl diphosphate from isopentenyl diphosphate: step 1/1. Functionally, catalyzes the 1,3-allylic rearrangement of the homoallylic substrate isopentenyl (IPP) to its highly electrophilic allylic isomer, dimethylallyl diphosphate (DMAPP). In Photobacterium profundum (strain SS9), this protein is Isopentenyl-diphosphate Delta-isomerase.